The chain runs to 277 residues: Acetyl-coenzyme A carboxylase carboxyl transferase subunit beta (277 aa).

Residues 22–277 form the CoA carboxyltransferase N-terminal domain; the sequence is LWTKCPGCNR…TLKQLLYFLT (256 aa). Cys-26, Cys-29, Cys-45, and Cys-48 together coordinate Zn(2+). The segment at 26–48 adopts a C4-type zinc-finger fold; sequence CPGCNRFLYTKELELNQSVCHYC.

This sequence belongs to the AccD/PCCB family. In terms of assembly, acetyl-CoA carboxylase is a heterohexamer composed of biotin carboxyl carrier protein (AccB), biotin carboxylase (AccC) and two subunits each of ACCase subunit alpha (AccA) and ACCase subunit beta (AccD). The cofactor is Zn(2+).

The protein localises to the cytoplasm. It carries out the reaction N(6)-carboxybiotinyl-L-lysyl-[protein] + acetyl-CoA = N(6)-biotinyl-L-lysyl-[protein] + malonyl-CoA. Its pathway is lipid metabolism; malonyl-CoA biosynthesis; malonyl-CoA from acetyl-CoA: step 1/1. Component of the acetyl coenzyme A carboxylase (ACC) complex. Biotin carboxylase (BC) catalyzes the carboxylation of biotin on its carrier protein (BCCP) and then the CO(2) group is transferred by the transcarboxylase to acetyl-CoA to form malonyl-CoA. This Methylacidiphilum infernorum (isolate V4) (Methylokorus infernorum (strain V4)) protein is Acetyl-coenzyme A carboxylase carboxyl transferase subunit beta.